The following is a 228-amino-acid chain: Probable U3 small nucleolar RNA-associated protein 11 (228 aa).

Disordered regions lie at residues methionine 1–lysine 23 and serine 192–leucine 211. Basic and acidic residues predominate over residues alanine 12–lysine 23.

The protein belongs to the UTP11 family. As to quaternary structure, component of the ribosomal small subunit (SSU) processome.

The protein localises to the nucleus. Its subcellular location is the nucleolus. In terms of biological role, involved in nucleolar processing of pre-18S ribosomal RNA. The chain is Probable U3 small nucleolar RNA-associated protein 11 from Arabidopsis thaliana (Mouse-ear cress).